We begin with the raw amino-acid sequence, 1662 residues long: Cortactin-binding protein 2 (1662 aa).

5 disordered regions span residues 1-23, 203-222, 361-440, 454-479, and 498-618; these read MATD…AGAA, KKKT…RSTE, SHSD…LHPG, GNAN…PTSR, and RFTS…PSID. The stretch at 119-276 forms a coiled coil; it reads KKMQERMSAQ…EQLKRGSDSK (158 aa). Residues 386–396 show a composition bias toward low complexity; the sequence is PSTDSTPDPTS. Residues 411 to 422 show a composition bias toward polar residues; that stretch reads QTPGIAPQNSQA. Position 498 is an asymmetric dimethylarginine (Arg498). A compositionally biased stretch (polar residues) spans 583-597; it reads TVASPPSSLPQGNRV. ANK repeat units follow at residues 709–739, 743–772, 776–805, 809–838, 842–871, and 912–942; these read GRPT…DINY, DGHS…QINA, NGFT…NINH, GGQT…NRSV, DGWT…PACG, and EGWT…EPER. Positions 1450-1474 are disordered; the sequence is GESGAWRKVNTSPRRKSGRFSLPTW. Residue Ser1524 is modified to Phosphoserine. Disordered regions lie at residues 1580 to 1602 and 1618 to 1662; these read SQKE…KSKT and SKVT…KPNK. The segment covering 1582–1599 has biased composition (polar residues); sequence KEVSPLSSHQTTECSNSK. A compositionally biased stretch (low complexity) spans 1624 to 1638; the sequence is SQNTKRSSSSSNTRQ. Residues 1639–1648 are compositionally biased toward polar residues; the sequence is IEINNNSKEN. The span at 1649-1662 shows a compositional bias: basic and acidic residues; the sequence is WNLHKNEHLDKPNK.

In terms of assembly, interacts with CTTN/cortactin SH3 domain. Interacts with STRN, STRN4/zinedin and MOB4/phocein; this interactions mediate the association with the STRIPAK core complex and may regulate dendritic spine distribution of the STRIPAK complex in hippocampal neurons. Activation of glutamate receptors weakens the interaction with STRN and STRN4.

It localises to the cytoplasm. It is found in the cell cortex. The protein localises to the cell projection. The protein resides in the dendritic spine. Functionally, regulates the dendritic spine distribution of CTTN/cortactin in hippocampal neurons, and thus controls dendritic spinogenesis and dendritic spine maintenance. Associates with the striatin-interacting phosphatase and kinase (STRIPAK) core complex to regulate dendritic spine distribution of the STRIPAK complex in hippocampal neurons. In Chlorocebus aethiops (Green monkey), this protein is Cortactin-binding protein 2 (CTTNBP2).